The primary structure comprises 122 residues: Histone H2B (122 aa).

A disordered region spans residues 1–31; it reads MPPKPSGKGQKKAGKAKGAPSTNKKRKRKRK. P2 carries the n,N-dimethylproline modification. An Isoglutamyl lysine isopeptide (Gln-Lys) (interchain with K-5 in histone H4) cross-link involves residue Q10. A glycan (O-linked (GlcNAc) serine) is linked at S109. A Glycyl lysine isopeptide (Lys-Gly) (interchain with G-Cter in ubiquitin) cross-link involves residue K117.

Belongs to the histone H2B family. The nucleosome is a histone octamer containing two molecules each of H2A, H2B, H3 and H4 assembled in one H3-H4 heterotetramer and two H2A-H2B heterodimers. The octamer wraps approximately 147 bp of DNA. Post-translationally, monoubiquitination of Lys-117 gives a specific tag for epigenetic transcriptional activation and is also prerequisite for histone H3 'Lys-4' and 'Lys-79' methylation. In terms of processing, glcNAcylation at Ser-109 promotes monoubiquitination of Lys-117. It fluctuates in response to extracellular glucose, and associates with transcribed genes.

It localises to the nucleus. Its subcellular location is the chromosome. Its function is as follows. Core component of nucleosome. Nucleosomes wrap and compact DNA into chromatin, limiting DNA accessibility to the cellular machineries which require DNA as a template. Histones thereby play a central role in transcription regulation, DNA repair, DNA replication and chromosomal stability. DNA accessibility is regulated via a complex set of post-translational modifications of histones, also called histone code, and nucleosome remodeling. The chain is Histone H2B from Patiria pectinifera (Starfish).